The sequence spans 502 residues: Beta-glucosidase 7 (502 aa).

The N-terminal stretch at 1 to 22 is a signal peptide; the sequence is MKPFSQFFVFVVTVSATSYIDA. A beta-D-glucoside contacts are provided by residues Q42, H140, and 185–186; that span reads NE. The active-site Proton donor is the E186. An N-linked (GlcNAc...) asparagine glycan is attached at N208. Y325 provides a ligand contact to a beta-D-glucoside. N359 carries an N-linked (GlcNAc...) asparagine glycan. E392 lines the a beta-D-glucoside pocket. Residue E392 is the Nucleophile of the active site. N-linked (GlcNAc...) asparagine glycosylation occurs at N425. 2 residues coordinate a beta-D-glucoside: W435 and Y451. N-linked (GlcNAc...) asparagine glycosylation is found at N457 and N479.

This sequence belongs to the glycosyl hydrolase 1 family.

The enzyme catalyses Hydrolysis of terminal, non-reducing beta-D-glucosyl residues with release of beta-D-glucose.. The sequence is that of Beta-glucosidase 7 from Arabidopsis thaliana (Mouse-ear cress).